Consider the following 325-residue polypeptide: NADH-quinone oxidoreductase subunit H (325 aa).

9 helical membrane passes run 11-31, 50-69, 81-101, 114-134, 154-174, 186-206, 237-257, 265-285, and 304-324; these read ILLSILKAVVILLVVVTCGAF, NRVGWGGSLQLVADMIKMFF, VIFTLAPMIAFTSLLLSFAIV, IGILFFLMMAGLAVYAVLFAG, VSYEVFLGLSLMGVVAQAGSF, LWNVIPQFFGFVTFAIAGVAV, FFVGEYIGIVTVSALMVTLFF, LPPFVWFALKTAFFMMMFILI, and VCLPLTLINLLVTAAVILWQA.

It belongs to the complex I subunit 1 family. In terms of assembly, NDH-1 is composed of 13 different subunits. Subunits NuoA, H, J, K, L, M, N constitute the membrane sector of the complex.

It localises to the cell inner membrane. The catalysed reaction is a quinone + NADH + 5 H(+)(in) = a quinol + NAD(+) + 4 H(+)(out). In terms of biological role, NDH-1 shuttles electrons from NADH, via FMN and iron-sulfur (Fe-S) centers, to quinones in the respiratory chain. The immediate electron acceptor for the enzyme in this species is believed to be ubiquinone. Couples the redox reaction to proton translocation (for every two electrons transferred, four hydrogen ions are translocated across the cytoplasmic membrane), and thus conserves the redox energy in a proton gradient. This subunit may bind ubiquinone. In Salmonella agona (strain SL483), this protein is NADH-quinone oxidoreductase subunit H.